A 312-amino-acid polypeptide reads, in one-letter code: Zinc transporter ZitB (312 aa).

6 helical membrane passes run 16-36 (LLIA…GGWL), 40-60 (LALL…FIAL), 81-101 (LTTL…ILIV), 117-137 (TPML…FWIL), 153-173 (LHVL…IVIL), and 177-197 (WTPI…RNAW).

This sequence belongs to the cation diffusion facilitator (CDF) transporter (TC 2.A.4) family. SLC30A subfamily.

It localises to the cell inner membrane. Functionally, involved in zinc efflux across the cytoplasmic membrane, thus reducing zinc accumulation in the cytoplasm and rendering bacteria more resistant to zinc. It may contribute to zinc homeostasis at low concentrations of zinc. The sequence is that of Zinc transporter ZitB from Yersinia pseudotuberculosis serotype I (strain IP32953).